The following is a 226-amino-acid chain: ATP synthase F(0) complex subunit a (226 aa).

A run of 5 helical transmembrane segments spans residues 9-29 (FITP…FPSL), 68-88 (WTLM…LGLL), 97-117 (QLSM…ITGF), 138-158 (IPML…ALAV), and 184-204 (ISPT…ILEF).

Belongs to the ATPase A chain family. As to quaternary structure, component of the ATP synthase complex composed at least of ATP5F1A/subunit alpha, ATP5F1B/subunit beta, ATP5MC1/subunit c (homooctomer), MT-ATP6/subunit a, MT-ATP8/subunit 8, ATP5ME/subunit e, ATP5MF/subunit f, ATP5MG/subunit g, ATP5MK/subunit k, ATP5MJ/subunit j, ATP5F1C/subunit gamma, ATP5F1D/subunit delta, ATP5F1E/subunit epsilon, ATP5PF/subunit F6, ATP5PB/subunit b, ATP5PD/subunit d, ATP5PO/subunit OSCP. ATP synthase complex consists of a soluble F(1) head domain (subunits alpha(3) and beta(3)) - the catalytic core - and a membrane F(0) domain - the membrane proton channel (subunits c, a, 8, e, f, g, k and j). These two domains are linked by a central stalk (subunits gamma, delta, and epsilon) rotating inside the F1 region and a stationary peripheral stalk (subunits F6, b, d, and OSCP). Interacts with DNAJC30; interaction is direct.

The protein localises to the mitochondrion inner membrane. The catalysed reaction is H(+)(in) = H(+)(out). Functionally, subunit a, of the mitochondrial membrane ATP synthase complex (F(1)F(0) ATP synthase or Complex V) that produces ATP from ADP in the presence of a proton gradient across the membrane which is generated by electron transport complexes of the respiratory chain. ATP synthase complex consist of a soluble F(1) head domain - the catalytic core - and a membrane F(1) domain - the membrane proton channel. These two domains are linked by a central stalk rotating inside the F(1) region and a stationary peripheral stalk. During catalysis, ATP synthesis in the catalytic domain of F(1) is coupled via a rotary mechanism of the central stalk subunits to proton translocation. With the subunit c (ATP5MC1), forms the proton-conducting channel in the F(0) domain, that contains two crucial half-channels (inlet and outlet) that facilitate proton movement from the mitochondrial intermembrane space (IMS) into the matrix. Protons are taken up via the inlet half-channel and released through the outlet half-channel, following a Grotthuss mechanism. The protein is ATP synthase F(0) complex subunit a of Capra hircus (Goat).